The primary structure comprises 251 residues: 3-deoxy-manno-octulosonate cytidylyltransferase (251 aa).

This sequence belongs to the KdsB family.

The protein localises to the cytoplasm. It catalyses the reaction 3-deoxy-alpha-D-manno-oct-2-ulosonate + CTP = CMP-3-deoxy-beta-D-manno-octulosonate + diphosphate. It participates in nucleotide-sugar biosynthesis; CMP-3-deoxy-D-manno-octulosonate biosynthesis; CMP-3-deoxy-D-manno-octulosonate from 3-deoxy-D-manno-octulosonate and CTP: step 1/1. Its pathway is bacterial outer membrane biogenesis; lipopolysaccharide biosynthesis. Functionally, activates KDO (a required 8-carbon sugar) for incorporation into bacterial lipopolysaccharide in Gram-negative bacteria. The protein is 3-deoxy-manno-octulosonate cytidylyltransferase of Chelativorans sp. (strain BNC1).